Consider the following 344-residue polypeptide: tRNA N6-adenosine threonylcarbamoyltransferase (344 aa).

2 residues coordinate Fe cation: His-112 and His-116. Residues Leu-134–Gly-138, Asp-167, Gly-180, and Asn-280 each bind substrate. Asp-308 contacts Fe cation.

This sequence belongs to the KAE1 / TsaD family. Requires Fe(2+) as cofactor.

The protein localises to the cytoplasm. It carries out the reaction L-threonylcarbamoyladenylate + adenosine(37) in tRNA = N(6)-L-threonylcarbamoyladenosine(37) in tRNA + AMP + H(+). Functionally, required for the formation of a threonylcarbamoyl group on adenosine at position 37 (t(6)A37) in tRNAs that read codons beginning with adenine. Is involved in the transfer of the threonylcarbamoyl moiety of threonylcarbamoyl-AMP (TC-AMP) to the N6 group of A37, together with TsaE and TsaB. TsaD likely plays a direct catalytic role in this reaction. In Rickettsia peacockii (strain Rustic), this protein is tRNA N6-adenosine threonylcarbamoyltransferase.